The primary structure comprises 481 residues: Probable autolysin LytO (481 aa).

The Peptidase C51 domain occupies 7–148; the sequence is KNEFIEWLKT…AYDFPMWFIR (142 aa). A compositionally biased stretch (polar residues) spans 155 to 165; it reads TAPRSVQSPTQ. Positions 155 to 177 are disordered; that stretch reads TAPRSVQSPTQAPKKETAKPQPK. Positions 198-323 constitute an N-acetylmuramoyl-L-alanine amidase domain; it reads SNPKGIVIHN…NEFTSTSCPH (126 aa). One can recognise an SH3b domain in the interval 398 to 466; it reads EESARFTNGN…YLPIRTWNGS (69 aa).

The protein belongs to the N-acetylmuramoyl-L-alanine amidase 2 family.

The enzyme catalyses Hydrolyzes the link between N-acetylmuramoyl residues and L-amino acid residues in certain cell-wall glycopeptides.. Functionally, has weak lytic activity toward S.aureus cells. This chain is Probable autolysin LytO, found in Staphylococcus aureus (strain NCTC 8325 / PS 47).